We begin with the raw amino-acid sequence, 494 residues long: MKLMDLLEEIDTIEIKGEERINIENIYYDSRKVTPNSLFICIEGFQTDGHHFIDQAIKKGAIAIVAQKDMTGLDGVTWVQVKDTRQVMAQLGSTFYGRPSQHLELIGVTGTNGKTSTTYMIKKILENHERKVGLIGTIANWIGNTEVEAQRTTPESIDLQQIFKEMADEKVTECVMEVSSHALALERVAESEFKVGVFTNLTPEHLDFHENIDNYREAKKKLFYLTTVANVINIDDPHGAMIAEEVKKLKPSLITFGIKKQATVMAKNIATTLKDVTFDLVTPVGEARVTVKIPGIFSAYNALASIATSIAIGVPFDVIVQGIQSIPGVPGRFESVLGIKDFSVIVDYAHTPDAIENVIQAAKNVTEHRVITVFGCGGDRDRTKRSVMGEISGSLSDLSVITSDNPRTEDPYKILMMIEAGIKKTKGLYTIIEDRREAIRYAMKEAKKGDIVLIAGKGHEATQQIGSNVIIFDDCGVAREIAKEEGLDDSDIHS.

Position 30 (S30) interacts with UDP-N-acetyl-alpha-D-muramoyl-L-alanyl-D-glutamate. Residue 110–116 (GTNGKTS) participates in ATP binding. Residues 152–153 (TT), S179, and R187 each bind UDP-N-acetyl-alpha-D-muramoyl-L-alanyl-D-glutamate. K219 bears the N6-carboxylysine mark. Meso-2,6-diaminopimelate contacts are provided by residues R380, 404 to 407 (DNPR), G456, and E460. The Meso-diaminopimelate recognition motif signature appears at 404-407 (DNPR).

Belongs to the MurCDEF family. MurE subfamily. It depends on Mg(2+) as a cofactor. Post-translationally, carboxylation is probably crucial for Mg(2+) binding and, consequently, for the gamma-phosphate positioning of ATP.

It is found in the cytoplasm. It carries out the reaction UDP-N-acetyl-alpha-D-muramoyl-L-alanyl-D-glutamate + meso-2,6-diaminopimelate + ATP = UDP-N-acetyl-alpha-D-muramoyl-L-alanyl-gamma-D-glutamyl-meso-2,6-diaminopimelate + ADP + phosphate + H(+). It participates in cell wall biogenesis; peptidoglycan biosynthesis. Its function is as follows. Catalyzes the addition of meso-diaminopimelic acid to the nucleotide precursor UDP-N-acetylmuramoyl-L-alanyl-D-glutamate (UMAG) in the biosynthesis of bacterial cell-wall peptidoglycan. This is UDP-N-acetylmuramoyl-L-alanyl-D-glutamate--2,6-diaminopimelate ligase from Alkaliphilus metalliredigens (strain QYMF).